A 181-amino-acid polypeptide reads, in one-letter code: Cytochrome c-type biogenesis protein CcmE (181 aa).

Over 1–8 the chain is Cytoplasmic; it reads MNPRRKSR. Residues 9 to 29 form a helical; Signal-anchor for type II membrane protein membrane-spanning segment; sequence LKVVVSIIFGVAVAAGLTLYA. At 30–181 the chain is on the periplasmic side; it reads LSQNIDLFYT…TLKTLQGEAN (152 aa). Residues histidine 131 and tyrosine 135 each coordinate heme. Composition is skewed to basic and acidic residues over residues 135–148 and 156–166; these read YMPP…KEQH and ADLKGTSARDK. The tract at residues 135–166 is disordered; sequence YMPPELGDKLKEQHGAAGISEADLKGTSARDK.

It belongs to the CcmE/CycJ family.

The protein resides in the cell inner membrane. In terms of biological role, heme chaperone required for the biogenesis of c-type cytochromes. Transiently binds heme delivered by CcmC and transfers the heme to apo-cytochromes in a process facilitated by CcmF and CcmH. The sequence is that of Cytochrome c-type biogenesis protein CcmE from Actinobacillus pleuropneumoniae serotype 7 (strain AP76).